Consider the following 282-residue polypeptide: V-set domain-containing T-cell activation inhibitor 1 (282 aa).

Residues 1-24 (MASLGQIIFWSIINVIIILAGAIV) form the signal peptide. Ig-like V-type domains lie at 35–144 (HFIT…ANLE) and 153–241 (PEIN…IKVT). Intrachain disulfides connect C56/C130 and C168/C225. N216 carries N-linked (GlcNAc...) asparagine glycosylation. G257 carries the GPI-anchor amidated glycine lipid modification. Residues 258–282 (PSPCVSSVSAAGWALLSLSCCLMLR) constitute a propeptide, removed in mature form.

Belongs to the immunoglobulin superfamily. BTN/MOG family. In terms of processing, N-glycosylated.

It is found in the cell membrane. Its function is as follows. Negatively regulates T-cell-mediated immune response by inhibiting T-cell activation, proliferation, cytokine production and development of cytotoxicity. When expressed on the cell surface of tumor macrophages, plays an important role, together with regulatory T-cells (Treg), in the suppression of tumor-associated antigen-specific T-cell immunity. Involved in promoting epithelial cell transformation. The protein is V-set domain-containing T-cell activation inhibitor 1 of Rattus norvegicus (Rat).